The sequence spans 205 residues: tRNA (guanine-N(7)-)-methyltransferase (205 aa).

S-adenosyl-L-methionine contacts are provided by E34, E59, D86, and D107. Residue D107 is part of the active site. Residue K111 coordinates substrate. Positions 113–118 (RHEKRR) are interaction with RNA. Substrate-binding positions include D144 and 182–185 (TGYE).

It belongs to the class I-like SAM-binding methyltransferase superfamily. TrmB family.

The enzyme catalyses guanosine(46) in tRNA + S-adenosyl-L-methionine = N(7)-methylguanosine(46) in tRNA + S-adenosyl-L-homocysteine. It participates in tRNA modification; N(7)-methylguanine-tRNA biosynthesis. Its function is as follows. Catalyzes the formation of N(7)-methylguanine at position 46 (m7G46) in tRNA. The polypeptide is tRNA (guanine-N(7)-)-methyltransferase (Mycoplasmopsis synoviae (strain 53) (Mycoplasma synoviae)).